Consider the following 976-residue polypeptide: Ephrin type-A receptor 1 (976 aa).

The signal sequence occupies residues 1–25 (MERRWPLGLGLVLLLCAPLPPGARA). Topologically, residues 26-547 (KEVTLMDTSK…PVSRGLTGGE (522 aa)) are extracellular. Residues 27-209 (EVTLMDTSKA…FYQRCPETLN (183 aa)) form the Eph LBD domain. Fibronectin type-III domains lie at 332-445 (PPSA…MGHA) and 447-538 (SLSG…TSPP). A glycan (N-linked (GlcNAc...) asparagine) is linked at asparagine 414. A helical membrane pass occupies residues 548–568 (IVAVIFGLLLGAALLLGILVF). The Cytoplasmic segment spans residues 569-976 (RSRRAQRQRQ…ILCSIQGFKD (408 aa)). Tyrosine 599 and tyrosine 605 each carry phosphotyrosine; by autocatalysis. In terms of domain architecture, Protein kinase spans 624 to 884 (LMVDTVIGEG…KLQAHLEQLL (261 aa)). Residues 630 to 638 (IGEGEFGEV) and lysine 656 contribute to the ATP site. Residue aspartate 749 is the Proton acceptor of the active site. Tyrosine 781 is subject to Phosphotyrosine; by autocatalysis. Serine 906 and serine 910 each carry phosphoserine. In terms of domain architecture, SAM spans 913–976 (IPYRTVSEWL…ILCSIQGFKD (64 aa)). Tyrosine 930 is modified (phosphotyrosine; by autocatalysis). Residues 974-976 (FKD) carry the PDZ-binding motif.

Belongs to the protein kinase superfamily. Tyr protein kinase family. Ephrin receptor subfamily. Homodimer. Forms a signaling complex with LCK; PTK2B/PYK2 and PI3-kinase upon activation by EFNA1; regulates T-lymphocytes migration. Interacts (via SAM domain) with ILK (via ANK repeats); stimulated by EFNA1 but independent of the kinase activity of EPHA1. Interacts (kinase activity-dependent) with PTK2/FAK1. In terms of processing, phosphorylated. Autophosphorylation is stimulated by its ligand EFNA1. Ubiquitinated. As to expression, overexpressed in several carcinomas.

The protein localises to the cell membrane. It catalyses the reaction L-tyrosyl-[protein] + ATP = O-phospho-L-tyrosyl-[protein] + ADP + H(+). Functionally, receptor tyrosine kinase which binds promiscuously membrane-bound ephrin-A family ligands residing on adjacent cells, leading to contact-dependent bidirectional signaling into neighboring cells. The signaling pathway downstream of the receptor is referred to as forward signaling while the signaling pathway downstream of the ephrin ligand is referred to as reverse signaling. Binds with a low affinity EFNA3 and EFNA4 and with a high affinity to EFNA1 which most probably constitutes its cognate/functional ligand. Upon activation by EFNA1 induces cell attachment to the extracellular matrix inhibiting cell spreading and motility through regulation of ILK and downstream RHOA and RAC. Also plays a role in angiogenesis and regulates cell proliferation. May play a role in apoptosis. This is Ephrin type-A receptor 1 (EPHA1) from Homo sapiens (Human).